A 1256-amino-acid chain; its full sequence is GPI inositol-deacylase (1256 aa).

Over residues 37–48 (DVYANSTTNATA) the composition is skewed to polar residues. The tract at residues 37 to 203 (DVYANSTTNA…MEKEEEQKFV (167 aa)) is disordered. Asn-41 and Asn-45 each carry an N-linked (GlcNAc...) asparagine glycan. The segment covering 59 to 68 (PRPSRPSQSS) has biased composition (low complexity). A compositionally biased stretch (polar residues) spans 69–83 (AAERTSPESPSVRQS). Residues 107–135 (QSPSQQSQNQQQQQQQQQQQQQQQQQQQS) are compositionally biased toward low complexity. A compositionally biased stretch (polar residues) spans 143-156 (SGNFNWKLSHSRNG). Asn-155 carries N-linked (GlcNAc...) asparagine glycosylation. The segment covering 165 to 180 (FFSSSFSHSPSTPPLS) has biased composition (low complexity). The span at 190–202 (HSKEMEKEEEQKF) shows a compositional bias: basic and acidic residues. The helical transmembrane segment at 214-234 (AITFVTLLISILGIGFLALVL) threads the bilayer. Asn-235 carries an N-linked (GlcNAc...) asparagine glycan. The active site involves Ser-397. N-linked (GlcNAc...) asparagine glycosylation is present at Asn-582. 2 consecutive transmembrane segments (helical) span residues 882 to 902 (LYMR…TLVL) and 929 to 949 (SIPL…NSSS). N-linked (GlcNAc...) asparagine glycosylation occurs at Asn-960. Transmembrane regions (helical) follow at residues 980-1000 (PFFW…CTVF), 1005-1025 (LTLV…PGWI), 1053-1073 (ILLV…VCCL), 1103-1123 (SILL…VVWI), 1130-1150 (WLTP…IILV), and 1172-1192 (VLLF…AYML). N-linked (GlcNAc...) asparagine glycosylation is found at Asn-1212, Asn-1239, and Asn-1242.

Belongs to the GPI inositol-deacylase family.

It is found in the endoplasmic reticulum membrane. In terms of biological role, involved in inositol deacylation of GPI-anchored proteins which plays important roles in the quality control and ER-associated degradation of GPI-anchored proteins. This is GPI inositol-deacylase (bst-1) from Neurospora crassa (strain ATCC 24698 / 74-OR23-1A / CBS 708.71 / DSM 1257 / FGSC 987).